A 225-amino-acid polypeptide reads, in one-letter code: Viral late gene transcription factor 3 (225 aa).

A zinc finger spans residues 7–27; the sequence is CSNCKHNGLITESNHEFCIFC.

It belongs to the nucleo-cytoplasmic large DNA viruses (NCLDVs) VLTF-3 family. Interacts with the late transcription elongation factor H5/VLTF-4. Interacts with the late transcription factors VLTF-1.

Acts with RNA polymerase to initiate transcription from late gene promoters. The polypeptide is Viral late gene transcription factor 3 (VLTF3) (Fowlpox virus (strain NVSL) (FPV)).